Consider the following 210-residue polypeptide: Probable sporulation protein YtaF (210 aa).

6 helical membrane-spanning segments follow: residues 6–26 (ILLL…TYGL), 36–56 (ILVI…IGSF), 69–89 (LGGL…FKPA), 129–149 (VING…AFGA), 162–184 (VMSI…AGHF), and 190–210 (WIDK…LWKL).

The protein resides in the cell membrane. This is Probable sporulation protein YtaF (ytaF) from Bacillus subtilis (strain 168).